Here is a 704-residue protein sequence, read N- to C-terminus: Mannan-binding lectin serine protease 1 (704 aa).

Positions 1–24 are cleaved as a signal peptide; sequence MRFLSFWRLLLYHALCLALPEVSA. Residues 25-143 enclose the CUB 1 domain; the sequence is HTVELNEMFG…TGFDAHYMAV (119 aa). A homodimerization region spans residues 25–189; sequence HTVELNEMFG…HTDNRTCRVE (165 aa). The interval 25–189 is interaction with MBL2; the sequence is HTVELNEMFG…HTDNRTCRVE (165 aa). Residues 25 to 283 are interaction with FCN2; that stretch reads HTVELNEMFG…STQTHSVQIL (259 aa). The tract at residues 25-305 is interaction with MBL1; that stretch reads HTVELNEMFG…RLSYRAAGNE (281 aa). A glycan (N-linked (GlcNAc...) asparagine) is linked at N54. Ca(2+) is bound by residues E73, D81, D126, S128, D144, V145, and E147. The cysteines at positions 78 and 96 are disulfide-linked. The region spanning 144 to 187 is the EGF-like; calcium-binding domain; it reads DVDECKEREDEELSCDHYCHNYIGGYYCSCRFGYILHTDNRTCR. Intrachain disulfides connect C148–C162, C158–C171, C173–C186, and C190–C217. Residues N164, Y165, and G168 each contribute to the Ca(2+) site. N164 carries the post-translational modification (3R)-3-hydroxyasparagine. A glycan (N-linked (GlcNAc...) asparagine) is linked at N183. A CUB 2 domain is found at 190-302; it reads CSGNLFTQRT…RGWRLSYRAA (113 aa). E240, D250, D287, and S289 together coordinate Ca(2+). Cysteines 247 and 265 form a disulfide. Sushi domains are found at residues 304-369 and 370-439; these read NECP…TCKI and VDCG…TCLP. Cystine bridges form between C306–C354, C334–C367, C372–C419, C402–C437, C441–C577, C480–C496, C619–C636, and C647–C677. N-linked (GlcNAc...) asparagine glycosylation is found at N390 and N412. Residues 454-701 enclose the Peptidase S1 domain; sequence IFNGRPAQKG…NKDWIQRITG (248 aa). Residues H495 and D557 each act as charge relay system in the active site. S651 (charge relay system) is an active-site residue.

Belongs to the peptidase S1 family. Homodimer. Interacts with the oligomeric lectins MBL2, FCN2 and FCN3; triggers the lectin pathway of complement through activation of C3. Interacts with SERPING1. Interacts with COLEC11; probably triggers the lectin pathway of complement. Post-translationally, the iron and 2-oxoglutarate dependent 3-hydroxylation of aspartate and asparagine is (R) stereospecific within EGF domains. In terms of processing, N-glycosylated. Some N-linked glycan are of the complex-type. Autoproteolytic processing of the proenzyme produces the active enzyme composed on the heavy and the light chain held together by a disulfide bond. Isoform 1 but not isoform 2 is activated through autoproteolytic processing. Protein of the plasma which is primarily expressed by liver.

The protein localises to the secreted. Its activity is regulated as follows. Inhibited by SERPING1 and A2M. Functions in the lectin pathway of complement, which performs a key role in innate immunity by recognizing pathogens through patterns of sugar moieties and neutralizing them. The lectin pathway is triggered upon binding of mannan-binding lectin (MBL) and ficolins to sugar moieties which leads to activation of the associated proteases MASP1 and MASP2. Functions as an endopeptidase and may activate MASP2 or C2 or directly activate C3 the key component of complement reaction. Isoform 2 may have an inhibitory effect on the activation of the lectin pathway of complement or may cleave IGFBP5. Also plays a role in development. The protein is Mannan-binding lectin serine protease 1 (Masp1) of Mus musculus (Mouse).